We begin with the raw amino-acid sequence, 37 residues long: Large ribosomal subunit protein bL36c (37 aa).

This sequence belongs to the bacterial ribosomal protein bL36 family.

It localises to the plastid. The protein resides in the chloroplast. This Cyanidium caldarium (Red alga) protein is Large ribosomal subunit protein bL36c (rpl36).